A 132-amino-acid polypeptide reads, in one-letter code: Transcriptional repressor SmtB homolog (132 aa).

Zn(2+) is bound by residues Cys-20, His-26, Cys-71, Cys-73, Asp-114, His-116, His-127, and Glu-130. Residues 38–132 (MSLDQAQQMA…EVADHLQESD (95 aa)) enclose the HTH arsR-type domain. A DNA-binding region (H-T-H motif) is located at residues 72–91 (VCDLAAAMKVSESAVSHQLR).

In terms of assembly, homodimer.

Transcriptional repressor of the expression of the ziaA gene. Controls zinc homeostasis by triggering ZiaA-mediated efflux of excess zinc into the periplasm. This chain is Transcriptional repressor SmtB homolog (ziaR), found in Synechocystis sp. (strain ATCC 27184 / PCC 6803 / Kazusa).